The sequence spans 112 residues: Tyrosine-protein phosphatase 7 (112 aa).

A Tyrosine-protein phosphatase domain is found at 1–112; the sequence is NNVTIIVMIT…SSPESGPIVV (112 aa). D82 provides a ligand contact to substrate.

It belongs to the protein-tyrosine phosphatase family.

The catalysed reaction is O-phospho-L-tyrosyl-[protein] + H2O = L-tyrosyl-[protein] + phosphate. This Styela plicata (Wrinkled sea squirt) protein is Tyrosine-protein phosphatase 7 (STY-7).